The sequence spans 37 residues: Turripeptide Lol6.2 (37 aa).

3 disulfides stabilise this stretch: C4–C16, C8–C21, and C15–C29.

In terms of tissue distribution, expressed by the venom duct.

It is found in the secreted. In terms of biological role, acts as a neurotoxin by inhibiting an ion channel. The sequence is that of Turripeptide Lol6.2 from Iotyrris olangoensis (Sea snail).